The primary structure comprises 454 residues: Pup--protein ligase (454 aa).

Glu9 provides a ligand contact to Mg(2+). Arg53 contacts ATP. Tyr55 serves as a coordination point for Mg(2+). The Proton acceptor role is filled by Asp57. A Mg(2+)-binding site is contributed by Glu63. Residues Thr66 and Trp420 each coordinate ATP.

The protein belongs to the Pup ligase/Pup deamidase family. Pup-conjugating enzyme subfamily.

The enzyme catalyses ATP + [prokaryotic ubiquitin-like protein]-L-glutamate + [protein]-L-lysine = ADP + phosphate + N(6)-([prokaryotic ubiquitin-like protein]-gamma-L-glutamyl)-[protein]-L-lysine.. The protein operates within protein degradation; proteasomal Pup-dependent pathway. Its pathway is protein modification; protein pupylation. Functionally, catalyzes the covalent attachment of the prokaryotic ubiquitin-like protein modifier Pup to the proteasomal substrate proteins, thereby targeting them for proteasomal degradation. This tagging system is termed pupylation. The ligation reaction involves the side-chain carboxylate of the C-terminal glutamate of Pup and the side-chain amino group of a substrate lysine. This Paenarthrobacter aurescens (strain TC1) protein is Pup--protein ligase.